The following is a 272-amino-acid chain: NADPH-dependent aldehyde reductase 2, chloroplastic (272 aa).

The transit peptide at 1–53 (MAAASSVSSPPLCLAGRVAIVTGSSRGIGRAIAIHLAELGARVVVNYSTSPVE) directs the protein to the chloroplast. Position 26–50 (26–50 (RGIGRAIAIHLAELGARVVVNYSTS)) interacts with NADP(+). Ser-165 lines the substrate pocket. Tyr-179 (proton acceptor) is an active-site residue.

This sequence belongs to the short-chain dehydrogenases/reductases (SDR) family.

Its subcellular location is the plastid. It is found in the chloroplast. Functionally, aldehyde reductase that catalyzes the reduction of the aldehyde carbonyl groups on saturated and alpha,beta-unsaturated aldehydes with more than 5 carbons. No activity on alpha,beta-unsaturated ketones. Can use propionaldehyde, butyraldehyde, methylglyoxal, (e)-2-pentenal, (E)-2-hexenal, (Z)-3-hexenal and (E)-2-nonenal as substrates, but not propenal (acrolein), crotonaldehyde, 2-butanone, 3-buten-2-one or 1-penten-3-one. This is NADPH-dependent aldehyde reductase 2, chloroplastic from Arabidopsis thaliana (Mouse-ear cress).